The following is a 1096-amino-acid chain: Pentatricopeptide repeat-containing protein At5g55840 (1096 aa).

PPR repeat units lie at residues 122–156 (NPSV…GFNP), 157–191 (SVYT…KICP), 192–226 (DVAT…GYAP), 227–261 (TIVT…GVDA), 262–296 (DVCT…MIHP), 297–331 (NEVT…GLSP), 332–366 (NHVT…GLTP), 367–401 (SEVS…GVCV), 402–436 (GRIT…GIDP), 437–471 (DIVT…GLSP), 472–506 (NGII…GHTR), 507–541 (DHFT…GILP), 542–576 (NTVS…GHHP), 577–607 (TFFT…LHAV), 612–646 (DTVM…SILP), 647–681 (DSYT…GNVL), 683–717 (NKVM…GHTP), 718–752 (DIVT…NGGP), 753–787 (NLTT…GILP), 788–822 (DKLT…GVEV), 823–857 (DRYT…GISL), 858–892 (DKDT…GISP), 893–927 (ESRK…KICP), 928–962 (PNVA…KLVP), 963–997 (TIAS…GLKL), 998–1032 (DLVS…GFLA), and 1033–1068 (NATT…GFIT).

Belongs to the PPR family. P subfamily.

The sequence is that of Pentatricopeptide repeat-containing protein At5g55840 from Arabidopsis thaliana (Mouse-ear cress).